A 371-amino-acid polypeptide reads, in one-letter code: MREVNLLNRFTRQFLFLIVLVTQICGVATFVYNSKAQCFRQSGFLRFYSSLVLIFLALFLIVTTSKMFHNLQAVWPYVVGSVIILVVRIHGLLESAEIVELLNQMLRIMRQVNLMARHPNLFRLKHLLLLLLALQNLLRSLNTIVGISNHSAEAYDSFLNSVILLIILAVLLSFLLQITINICLFVVLIATYSELHHCTRRISNDMDKLRLHSVHESGQFMVLVKQLQGITEKLIRLRQNVFHITVRIIRHFRFHWLCAIIYGLLPFFSLTAKDQNGFNFLIISALNIIFQWTIFAILSRESRITRSLCTFHLTNYHKETARTIDELLHQEIWERITVTIYGNTLDTKLLFKLLSISAFCAFVNRLEYLHI.

The Cytoplasmic segment spans residues 1–13 (MREVNLLNRFTRQ). A helical transmembrane segment spans residues 14–34 (FLFLIVLVTQICGVATFVYNS). Over 35–42 (KAQCFRQS) the chain is Extracellular. The helical transmembrane segment at 43–63 (GFLRFYSSLVLIFLALFLIVT) threads the bilayer. The Cytoplasmic segment spans residues 64–72 (TSKMFHNLQ). Residues 73–93 (AVWPYVVGSVIILVVRIHGLL) form a helical membrane-spanning segment. Topologically, residues 94–126 (ESAEIVELLNQMLRIMRQVNLMARHPNLFRLKH) are extracellular. Residues 127–147 (LLLLLLALQNLLRSLNTIVGI) traverse the membrane as a helical segment. Over 148-161 (SNHSAEAYDSFLNS) the chain is Cytoplasmic. Residues 162–182 (VILLIILAVLLSFLLQITINI) traverse the membrane as a helical segment. Residues 183–251 (CLFVVLIATY…FHITVRIIRH (69 aa)) lie on the Extracellular side of the membrane. The chain crosses the membrane as a helical span at residues 252–272 (FRFHWLCAIIYGLLPFFSLTA). The Cytoplasmic segment spans residues 273–277 (KDQNG). A helical membrane pass occupies residues 278 to 298 (FNFLIISALNIIFQWTIFAIL). Over 299–371 (SRESRITRSL…FVNRLEYLHI (73 aa)) the chain is Extracellular.

It is found in the cell membrane. This chain is Gustatory receptor-like 65a, found in Drosophila melanogaster (Fruit fly).